A 197-amino-acid chain; its full sequence is uncharacterized protein (197 aa).

Residues 29 to 166 form the PfpI endopeptidase domain; it reads DWSVHTVSLD…FTNLILEMID (138 aa). Catalysis depends on C98, which acts as the Nucleophile.

This sequence belongs to the peptidase C56 family.

This is an uncharacterized protein from Bacillus subtilis (strain 168).